The primary structure comprises 81 residues: Photosystem I iron-sulfur center (81 aa).

4Fe-4S ferredoxin-type domains follow at residues 2–31 and 39–68; these read SHSV…MIPW and IASA…VRVY. Cys11, Cys14, Cys17, Cys21, Cys48, Cys51, Cys54, and Cys58 together coordinate [4Fe-4S] cluster.

In terms of assembly, the eukaryotic PSI reaction center is composed of at least 11 subunits. Requires [4Fe-4S] cluster as cofactor.

The protein localises to the plastid. It is found in the chloroplast thylakoid membrane. It catalyses the reaction reduced [plastocyanin] + hnu + oxidized [2Fe-2S]-[ferredoxin] = oxidized [plastocyanin] + reduced [2Fe-2S]-[ferredoxin]. Its function is as follows. Apoprotein for the two 4Fe-4S centers FA and FB of photosystem I (PSI); essential for photochemical activity. FB is the terminal electron acceptor of PSI, donating electrons to ferredoxin. The C-terminus interacts with PsaA/B/D and helps assemble the protein into the PSI complex. Required for binding of PsaD and PsaE to PSI. PSI is a plastocyanin-ferredoxin oxidoreductase, converting photonic excitation into a charge separation, which transfers an electron from the donor P700 chlorophyll pair to the spectroscopically characterized acceptors A0, A1, FX, FA and FB in turn. The protein is Photosystem I iron-sulfur center of Sorghum bicolor (Sorghum).